The primary structure comprises 157 residues: Protein Smg (157 aa).

Belongs to the Smg family.

This Salmonella agona (strain SL483) protein is Protein Smg.